A 221-amino-acid chain; its full sequence is MFIAKSIVIGLLICVLFFFFFVSRFNDKYELQPLLTLGLLNASLTALSDLLAQALDSYKLLKFRNKRDVSLEKYGNTILLPASTSKLDVHRTIRYAAYGLCLTPIQFRWFVALSNVIQTENPFIAIVLRVALDQFIFAPLGIVFFFLFMGITECKSYERLKSYFRKHYWPTLKANYILWPAVQLFNFTFVPLVLQVIFANAVSMVWTAYLSLKNSSPNADV.

The next 5 helical transmembrane spans lie at 2-22 (FIAK…FFFV), 34-54 (LLTL…LAQA), 97-117 (AYGL…SNVI), 131-151 (ALDQ…FMGI), and 177-197 (ILWP…LQVI).

The protein belongs to the peroxisomal membrane protein PXMP2/4 family.

It localises to the membrane. This is an uncharacterized protein from Schizosaccharomyces pombe (strain 972 / ATCC 24843) (Fission yeast).